Reading from the N-terminus, the 202-residue chain is dTTP/UTP pyrophosphatase (202 aa).

Asp74 functions as the Proton acceptor in the catalytic mechanism.

The protein belongs to the Maf family. YhdE subfamily. It depends on a divalent metal cation as a cofactor.

Its subcellular location is the cytoplasm. It catalyses the reaction dTTP + H2O = dTMP + diphosphate + H(+). The enzyme catalyses UTP + H2O = UMP + diphosphate + H(+). In terms of biological role, nucleoside triphosphate pyrophosphatase that hydrolyzes dTTP and UTP. May have a dual role in cell division arrest and in preventing the incorporation of modified nucleotides into cellular nucleic acids. This Methylococcus capsulatus (strain ATCC 33009 / NCIMB 11132 / Bath) protein is dTTP/UTP pyrophosphatase.